Here is a 146-residue protein sequence, read N- to C-terminus: Large ribosomal subunit protein uL15 (146 aa).

The tract at residues 1–56 (MKLHELRAAEGANKASKRVGRGTGSGLGKTSGRGQNGQNSRSGGGVRPGFEGGQMP) is disordered. Gly residues-rich tracts occupy residues 21-35 (RGTG…GRGQ) and 42-52 (SGGGVRPGFEG).

It belongs to the universal ribosomal protein uL15 family. Part of the 50S ribosomal subunit.

Its function is as follows. Binds to the 23S rRNA. This is Large ribosomal subunit protein uL15 from Clostridium botulinum (strain Okra / Type B1).